We begin with the raw amino-acid sequence, 139 residues long: Galactoside-binding soluble lectin 13 (139 aa).

The Galectin domain occupies 6-138; it reads VPYKLPVSLS…DISLTSVCVC (133 aa).

Homodimer; disulfide-linked. Detected in adult and fetal spleen, fetal kidney, adult urinary bladder and placenta. Placental expression originates predominantly from the syncytiotrophoblast.

It is found in the cytoplasm. The protein resides in the nucleus matrix. Its function is as follows. Binds beta-galactoside and lactose. Strong inducer of T-cell apoptosis. Has hemagglutinating activity towards chicken erythrocytes. This chain is Galactoside-binding soluble lectin 13 (LGALS13), found in Homo sapiens (Human).